A 349-amino-acid chain; its full sequence is tRNA pseudouridine synthase D (349 aa).

A substrate-binding site is contributed by phenylalanine 27. Catalysis depends on aspartate 80, which acts as the Nucleophile. A substrate-binding site is contributed by asparagine 129. In terms of domain architecture, TRUD spans 155–303 (GVPNYFGAQR…VEAARRAMLL (149 aa)). Substrate is bound at residue phenylalanine 329.

Belongs to the pseudouridine synthase TruD family.

It catalyses the reaction uridine(13) in tRNA = pseudouridine(13) in tRNA. Functionally, responsible for synthesis of pseudouridine from uracil-13 in transfer RNAs. In Escherichia coli O45:K1 (strain S88 / ExPEC), this protein is tRNA pseudouridine synthase D.